A 140-amino-acid polypeptide reads, in one-letter code: D-ribose pyranase (140 aa).

The active-site Proton donor is the histidine 20. Substrate is bound by residues aspartate 28, histidine 99, and 121-123 (YSS).

The protein belongs to the RbsD / FucU family. RbsD subfamily. In terms of assembly, homodecamer.

The protein localises to the cytoplasm. The enzyme catalyses beta-D-ribopyranose = beta-D-ribofuranose. The protein operates within carbohydrate metabolism; D-ribose degradation; D-ribose 5-phosphate from beta-D-ribopyranose: step 1/2. Catalyzes the interconversion of beta-pyran and beta-furan forms of D-ribose. This is D-ribose pyranase from Pseudothermotoga lettingae (strain ATCC BAA-301 / DSM 14385 / NBRC 107922 / TMO) (Thermotoga lettingae).